We begin with the raw amino-acid sequence, 188 residues long: MSIKSDKWIRRMAAEYNMIEPFEPNQIKQRNGESIVSYGTSSYGYDIRCSDEFKLFTNLNSTIVDPKRFDSNSFVDVKGDICIIPPNSFALARTVEYFRIPRNVLTICLGKSTYARCGIIVNVTPFEPEWEGYVTLEFSNTTPLPAKIYANEGVAQVIFFESDEVCETSYKDRNGKYQFQQGVTLPKI.

Residues 111–116 (KSTYAR), 135–137 (TLE), Q156, Y170, and Q180 each bind dCTP. E137 acts as the Proton donor/acceptor in catalysis.

Belongs to the dCTP deaminase family. Homotrimer.

The catalysed reaction is dCTP + H2O + H(+) = dUTP + NH4(+). It participates in pyrimidine metabolism; dUMP biosynthesis; dUMP from dCTP (dUTP route): step 1/2. Its function is as follows. Catalyzes the deamination of dCTP to dUTP. This chain is dCTP deaminase, found in Nitrosomonas europaea (strain ATCC 19718 / CIP 103999 / KCTC 2705 / NBRC 14298).